The chain runs to 324 residues: 2-oxoisovalerate dehydrogenase subunit beta (324 aa).

Residues Glu29, 58–60 (LSE), Gln82, and 86–89 (YIFP) contribute to the thiamine diphosphate site. Substrate contacts are provided by residues 83–86 (FADY) and His129. The active-site Proton acceptor is His129.

As to quaternary structure, heterotetramer of two alpha and two beta chains. Directly associated with ODBA in the E1 complex. The cofactor is thiamine diphosphate.

It carries out the reaction N(6)-[(R)-lipoyl]-L-lysyl-[protein] + 3-methyl-2-oxobutanoate + H(+) = N(6)-[(R)-S(8)-2-methylpropanoyldihydrolipoyl]-L-lysyl-[protein] + CO2. Its function is as follows. The branched-chain alpha-keto dehydrogenase complex catalyzes the overall conversion of alpha-keto acids to acyl-CoA and CO(2). It contains multiple copies of three enzymatic components: branched-chain alpha-keto acid decarboxylase (E1), lipoamide acyltransferase (E2) and lipoamide dehydrogenase (E3). This chain is 2-oxoisovalerate dehydrogenase subunit beta, found in Thermus thermophilus (strain ATCC BAA-163 / DSM 7039 / HB27).